Here is an 88-residue protein sequence, read N- to C-terminus: Kunitz-type U15-theraphotoxin-Hhn1i (88 aa).

The first 27 residues, M1–A27, serve as a signal peptide directing secretion. The propeptide occupies E28–R33. In terms of domain architecture, BPTI/Kunitz inhibitor spans C37–C85. 2 disulfides stabilise this stretch: C37–C85 and C60–C81.

It belongs to the venom Kunitz-type family. 03 (sub-Kunitz) subfamily. As to expression, expressed by the venom gland.

Its subcellular location is the secreted. Its function is as follows. Serine protease inhibitor that inhibits trypsin at a molar ratio of 1:1. The chain is Kunitz-type U15-theraphotoxin-Hhn1i from Cyriopagopus hainanus (Chinese bird spider).